We begin with the raw amino-acid sequence, 631 residues long: Phosphomethylpyrimidine synthase (631 aa).

Residues asparagine 239, methionine 268, tyrosine 297, histidine 333, 353-355, 394-397, and glutamate 433 contribute to the substrate site; these read SRG and DGLR. Position 437 (histidine 437) interacts with Zn(2+). Substrate is bound at residue tyrosine 460. Residue histidine 501 coordinates Zn(2+). 3 residues coordinate [4Fe-4S] cluster: cysteine 581, cysteine 584, and cysteine 589.

It belongs to the ThiC family. As to quaternary structure, homodimer. [4Fe-4S] cluster serves as cofactor.

It catalyses the reaction 5-amino-1-(5-phospho-beta-D-ribosyl)imidazole + S-adenosyl-L-methionine = 4-amino-2-methyl-5-(phosphooxymethyl)pyrimidine + CO + 5'-deoxyadenosine + formate + L-methionine + 3 H(+). It functions in the pathway cofactor biosynthesis; thiamine diphosphate biosynthesis. Catalyzes the synthesis of the hydroxymethylpyrimidine phosphate (HMP-P) moiety of thiamine from aminoimidazole ribotide (AIR) in a radical S-adenosyl-L-methionine (SAM)-dependent reaction. This chain is Phosphomethylpyrimidine synthase, found in Escherichia coli (strain 55989 / EAEC).